A 1346-amino-acid chain; its full sequence is G-protein coupled receptor-associated sorting protein 1 (1346 aa).

Disordered regions lie at residues 1 to 101 (MTGA…FRGE), 144 to 177 (TESI…RPRP), and 192 to 258 (ADKS…SAKT). Residues 21 to 36 (ENANAAEVEPEVPLVV) are compositionally biased toward low complexity. A compositionally biased stretch (basic residues) spans 211–226 (FRPRKSMKSNTRFRHM). Serine 295 bears the Phosphoserine mark. 2 disordered regions span residues 311–399 (EEAK…RPEE) and 461–485 (VSSF…SKSM). Residues 316 to 333 (RSKPRARKGVNMRARHQA) show a composition bias toward basic residues. Composition is skewed to basic and acidic residues over residues 347–361 (DKNK…EEKA) and 370–399 (KKEP…RPEE). The segment covering 461 to 484 (VSSFCLGSGKKTSMESGPKATSKS) has biased composition (polar residues). A phosphoserine mark is found at serine 619 and serine 626. At threonine 860 the chain carries Phosphothreonine. Serine 862 is subject to Phosphoserine. The segment at 984–1004 (ACEPESSTEHEPDPSRRPQSW) is disordered. Positions 990–1003 (STEHEPDPSRRPQS) are enriched in basic and acidic residues.

It belongs to the GPRASP family. In terms of assembly, interacts with cytoplasmic tails of a variety of G-protein coupled receptors such as delta opioid receptor/OPRD1, beta-2 adrenergic receptor/ADRB2 and D4 dopamine receptor/DRD4. Interacts with BECN2; the interaction is direct and with D2 dopamine receptor/DRD2. Interacts with PER1. Expressed in the brain.

The protein localises to the cytoplasm. Its function is as follows. Modulates lysosomal sorting and functional down-regulation of a variety of G-protein coupled receptors. Targets receptors for degradation in lysosomes via its interaction with BECN2. The sequence is that of G-protein coupled receptor-associated sorting protein 1 (Gprasp1) from Rattus norvegicus (Rat).